The sequence spans 286 residues: Thymidylate synthase (286 aa).

140–141 (RR) is a dUMP binding site. The active-site Nucleophile is the Cys-161. Residues 185-188 (RSND), Asn-196, and 226-228 (HIY) each bind dUMP. Asp-188 is a (6R)-5,10-methylene-5,6,7,8-tetrahydrofolate binding site. Residue Ala-285 participates in (6R)-5,10-methylene-5,6,7,8-tetrahydrofolate binding.

It belongs to the thymidylate synthase family. Bacterial-type ThyA subfamily. Homodimer.

Its subcellular location is the cytoplasm. The enzyme catalyses dUMP + (6R)-5,10-methylene-5,6,7,8-tetrahydrofolate = 7,8-dihydrofolate + dTMP. The protein operates within pyrimidine metabolism; dTTP biosynthesis. Catalyzes the reductive methylation of 2'-deoxyuridine-5'-monophosphate (dUMP) to 2'-deoxythymidine-5'-monophosphate (dTMP) while utilizing 5,10-methylenetetrahydrofolate (mTHF) as the methyl donor and reductant in the reaction, yielding dihydrofolate (DHF) as a by-product. This enzymatic reaction provides an intracellular de novo source of dTMP, an essential precursor for DNA biosynthesis. The protein is Thymidylate synthase of Streptococcus thermophilus (strain ATCC BAA-250 / LMG 18311).